A 433-amino-acid chain; its full sequence is 23S rRNA (uracil(1939)-C(5))-methyltransferase RlmD (433 aa).

The TRAM domain occupies 10–68 (RTTTRQIITVSVNDLDSFGQGVARHNGKTLFIPGLLPQENAEVTVTEDKKQYARAKVVR). Cys-81, Cys-87, Cys-90, and Cys-162 together coordinate [4Fe-4S] cluster. Residues Gln-265, Phe-294, Asn-299, Glu-315, Asn-342, and Asp-363 each contribute to the S-adenosyl-L-methionine site. Cys-389 acts as the Nucleophile in catalysis.

The protein belongs to the class I-like SAM-binding methyltransferase superfamily. RNA M5U methyltransferase family. RlmD subfamily.

It carries out the reaction uridine(1939) in 23S rRNA + S-adenosyl-L-methionine = 5-methyluridine(1939) in 23S rRNA + S-adenosyl-L-homocysteine + H(+). Functionally, catalyzes the formation of 5-methyl-uridine at position 1939 (m5U1939) in 23S rRNA. This is 23S rRNA (uracil(1939)-C(5))-methyltransferase RlmD from Escherichia coli (strain UTI89 / UPEC).